The chain runs to 614 residues: Zinc finger protein 276 (614 aa).

The segment at 1-46 (MKRDRLGRFLSPGIARQRGGSGGGCGSGRTRGRPSRSGGTSADGAA) is disordered. Residues 19–29 (GGSGGGCGSGR) are compositionally biased toward gly residues. The ZAD domain maps to 78-164 (GHCRLCHGKF…LQRVNVSPAG (87 aa)). Zn(2+) contacts are provided by C80, C83, C137, and C140. The segment at 271-422 (RLAQNSESNP…PGPKPGWKKK (152 aa)) is disordered. Composition is skewed to polar residues over residues 272–282 (LAQNSESNPTG) and 291–302 (RETQVGSETKTL). Residues 357–369 (SDLSEGDFLSEDE) are compositionally biased toward acidic residues. A compositionally biased stretch (basic and acidic residues) spans 386–408 (YPEKKVSGKKSEGREAKRPEEPK). Over residues 409–422 (IRKKPGPKPGWKKK) the composition is skewed to basic residues. C2H2-type zinc fingers lie at residues 434 to 458 (YKCP…IKEH), 465 to 490 (RPCP…KLIH), 496 to 518 (YICD…QMRH), 524 to 546 (LQCE…MTKH), and 554 to 577 (FACD…SMVH). A disordered region spans residues 588-614 (PLEAEPPPGPLSPSGTMEGQAVKPEPT).

As to expression, found in all the examined tissues, with highest levels in kidney, liver, lung, and spleen.

Its subcellular location is the nucleus. It is found in the chromosome. The protein resides in the centromere. The protein localises to the kinetochore. Its function is as follows. May be involved in transcriptional regulation. This chain is Zinc finger protein 276 (Znf276), found in Mus musculus (Mouse).